Consider the following 374-residue polypeptide: L-serine/homoserine O-acetyltransferase (374 aa).

The 312-residue stretch at 46–357 (AVLVLTGLSP…TPAGHDAFLV (312 aa)) folds into the AB hydrolase-1 domain. Ser-149 serves as the catalytic Nucleophile. Catalysis depends on residues Asp-319 and His-352.

Belongs to the AB hydrolase superfamily. MetX family. In terms of assembly, homodimer.

It localises to the cytoplasm. The catalysed reaction is L-serine + acetyl-CoA = O-acetyl-L-serine + CoA. It carries out the reaction L-homoserine + acetyl-CoA = O-acetyl-L-homoserine + CoA. The protein operates within antibiotic biosynthesis. In terms of biological role, involved in the biosynthesis of the antibiotic D-cycloserine (DCS), a cyclic structural analog of D-alanine, used as an antitubercular agent. Catalyzes the transfer of the acetyl group from acetyl-CoA to the hydroxyl group of L-serine to yield the activated serine, O-acetyl-L-serine. It prefers L-serine over L-homoserine. The sequence is that of L-serine/homoserine O-acetyltransferase from Streptomyces lavendulae.